Reading from the N-terminus, the 640-residue chain is Protein UL35 (640 aa).

3 disordered regions span residues 353-373 (ERGE…PREA), 500-571 (ASSS…PRQR), and 586-640 (AYSH…LRHL). Residues 358 to 367 (GDEDEEQEND) are compositionally biased toward acidic residues. Positions 500–562 (ASSSSASSSS…LSGSHGISSA (63 aa)) are enriched in low complexity. Over residues 588–598 (SHHRRHRRRRS) the composition is skewed to basic residues. Residues 631 to 640 (DDLAENLRHL) are compositionally biased toward basic and acidic residues.

This sequence belongs to the herpesviridae pp85 family. Interacts with UL82. Interacts with isoform UL35A. Interacts with host UBP7; this interaction significantly inhibits the ability of USP7 to form nuclear bodies. Interacts with host DCAF1 (via C-terminus). Interacts with host SNX5; this interaction allows proper gB localization during viral assembly. Interacts with host TBK1; this interaction prevents type I interferon production. In terms of assembly, interacts with UL82. Interacts with isoform UL35. Interacts with host UBP7; this interaction significantly inhibits the ability of USP7 to form nuclear bodies. Interacts with host SNX5; this interaction allows proper gB localization during viral assembly.

The protein localises to the virion tegument. The protein resides in the host nucleus. It is found in the host cytoplasm. In terms of biological role, plays important role in immediate-early gene expression through interaction with UL82. Forms nuclear bodies in host nucleus, independently of PML. In turn, UL35 nuclear bodies associate with and remodel PML bodies. Through interaction with host DCAF1, causes cells to accumulate in the G2 phase of the cell cycle by inducing a DNA damage response. Regulates viral assembly by controlling the localization of the essential gB through regulation of a retrograde transport pathway. This modulation occurs via binding and inhibition of host sorting nexin 5/SNX5. Also plays a role in the inhibition of pattern recognition receptor-mediated type I interferon signaling at the level of TBK1. Its function is as follows. Promotes cytoplasmic UL82 accumulation and inhibits UL35-containing nuclear bodies formation. Regulates viral assembly by controlling the localization of the essential gB through regulation of a retrograde transport pathway. This modulation occurs via binding and inhibition of host sorting nexin 5/SNX5. The sequence is that of Protein UL35 (UL35) from Homo sapiens (Human).